The following is a 197-amino-acid chain: Peptidoglycan-recognition protein 1 (197 aa).

Residues 1-23 (MKLATITFFLLTEIFFYISYAEA) form the signal peptide. 2 disulfide bridges follow: Cys-31–Cys-154 and Cys-68–Cys-74. An N-acetylmuramoyl-L-alanine amidase domain is found at 53–180 (KPLERVVIHH…RNVKATKSPG (128 aa)).

This sequence belongs to the N-acetylmuramoyl-L-alanine amidase 2 family. As to expression, localizes to plasma (at protein level).

It localises to the secreted. In terms of biological role, peptidoglycan-recognition protein probably involved in innate immunity by binding to peptidoglycans (PGN) of bacteria and activating the prophenoloxidase (proPO) cascade immune response. Binds to 1,3-beta-D-glucan and PGN. The protein is Peptidoglycan-recognition protein 1 (PGRP-1) of Holotrichia diomphalia (Korean black chafer).